The sequence spans 400 residues: Phosphoglycerate kinase (400 aa).

Residues 23–25, Arg-38, 61–64, Arg-120, and Arg-153 contribute to the substrate site; these read DLN and HFGR. Residues Lys-203, Glu-325, and 355–358 each bind ATP; that span reads GGDT.

The protein belongs to the phosphoglycerate kinase family. As to quaternary structure, monomer.

It is found in the cytoplasm. It carries out the reaction (2R)-3-phosphoglycerate + ATP = (2R)-3-phospho-glyceroyl phosphate + ADP. Its pathway is carbohydrate degradation; glycolysis; pyruvate from D-glyceraldehyde 3-phosphate: step 2/5. This is Phosphoglycerate kinase from Rhizobium leguminosarum bv. trifolii (strain WSM2304).